Reading from the N-terminus, the 243-residue chain is MADLLLGVNIDHIATLRNARGTIYPDPVQAAFIAEQAGADGITVHLREDRRHITDRDVRILRQTIQTRMNLEMAVTDEMVDIACDIKPHFCCLVPEKRQEVTTEGGLDVAGQVDKMTLVVGRLADVGILVSLFIDADFRQIDAAVAAGAPYIEIHTGAYADASTVLERQAELMRIAKAATYAAGKGLKVNAGHGLTYHNVQPIAALPEMHELNIGHAIIGQAVMTGLATAVTDMKVLMREARR.

Position 9 (asparagine 9) interacts with 3-amino-2-oxopropyl phosphate. 11–12 provides a ligand contact to 1-deoxy-D-xylulose 5-phosphate; it reads DH. Arginine 20 is a 3-amino-2-oxopropyl phosphate binding site. Histidine 45 (proton acceptor) is an active-site residue. 1-deoxy-D-xylulose 5-phosphate is bound by residues arginine 47 and histidine 52. The active-site Proton acceptor is glutamate 72. 1-deoxy-D-xylulose 5-phosphate is bound at residue threonine 102. Catalysis depends on histidine 193, which acts as the Proton donor. Residues glycine 194 and 215 to 216 each bind 3-amino-2-oxopropyl phosphate; that span reads GH.

This sequence belongs to the PNP synthase family. Homooctamer; tetramer of dimers.

The protein localises to the cytoplasm. It catalyses the reaction 3-amino-2-oxopropyl phosphate + 1-deoxy-D-xylulose 5-phosphate = pyridoxine 5'-phosphate + phosphate + 2 H2O + H(+). The protein operates within cofactor biosynthesis; pyridoxine 5'-phosphate biosynthesis; pyridoxine 5'-phosphate from D-erythrose 4-phosphate: step 5/5. Functionally, catalyzes the complicated ring closure reaction between the two acyclic compounds 1-deoxy-D-xylulose-5-phosphate (DXP) and 3-amino-2-oxopropyl phosphate (1-amino-acetone-3-phosphate or AAP) to form pyridoxine 5'-phosphate (PNP) and inorganic phosphate. This is Pyridoxine 5'-phosphate synthase from Yersinia pseudotuberculosis serotype I (strain IP32953).